The primary structure comprises 212 residues: Cyclin-dependent kinase inhibitor 3 (212 aa).

A compositionally biased stretch (polar residues) spans methionine 1–phenylalanine 12. The interval methionine 1–glutamate 23 is disordered. The interaction with CDK2 stretch occupies residues methionine 1–leucine 34. Residues aspartate 13–glutamate 23 are compositionally biased toward acidic residues. A Tyrosine-protein phosphatase domain is found at leucine 32 to serine 201. The active-site Phosphocysteine intermediate is the cysteine 140.

Belongs to the protein-tyrosine phosphatase family. Interacts with cyclin-dependent kinases such as CDK1, CDK2 and CDK3. Does not interact with CDK4. Interacts (via C-terminus) with phosphorylated CDK2 (via C-terminal helix). Interacts with MS4A3 (via C-terminus); the interaction enhances CDKN3 enzymatic activity.

Its subcellular location is the cytoplasm. The protein resides in the perinuclear region. The enzyme catalyses O-phospho-L-tyrosyl-[protein] + H2O = L-tyrosyl-[protein] + phosphate. The catalysed reaction is O-phospho-L-seryl-[protein] + H2O = L-seryl-[protein] + phosphate. It carries out the reaction O-phospho-L-threonyl-[protein] + H2O = L-threonyl-[protein] + phosphate. Functionally, may play a role in cell cycle regulation. Dual specificity phosphatase active toward substrates containing either phosphotyrosine or phosphoserine residues. Dephosphorylates CDK2 at 'Thr-160' in a cyclin-dependent manner. The protein is Cyclin-dependent kinase inhibitor 3 of Sus scrofa (Pig).